Reading from the N-terminus, the 160-residue chain is MRHCIYPGTFDPVTYGHLDVLARAVKLFDHVTVAVAENTPKGPLFTSAQRIAMLQPNVTRFPNVSVTSFNSLLVEFAMAQKAIAVIRGLRAFSDFEFEFHMALMNRHLESQIETIFVMPNEQFSYTSSSLVKDVAKHGGDVSHFVPPNVAAALEAVFGTK.

T9 serves as a coordination point for substrate. Residues T9 to F10 and H17 each bind ATP. Substrate-binding residues include K41, L73, and R87. ATP is bound by residues G88–R90, E98, and F123–S129.

This sequence belongs to the bacterial CoaD family. As to quaternary structure, homohexamer. The cofactor is Mg(2+).

It localises to the cytoplasm. The catalysed reaction is (R)-4'-phosphopantetheine + ATP + H(+) = 3'-dephospho-CoA + diphosphate. It functions in the pathway cofactor biosynthesis; coenzyme A biosynthesis; CoA from (R)-pantothenate: step 4/5. Reversibly transfers an adenylyl group from ATP to 4'-phosphopantetheine, yielding dephospho-CoA (dPCoA) and pyrophosphate. The protein is Phosphopantetheine adenylyltransferase of Opitutus terrae (strain DSM 11246 / JCM 15787 / PB90-1).